A 130-amino-acid polypeptide reads, in one-letter code: B1 protein (130 aa).

The N-terminal stretch at 1-12 is a signal peptide; sequence LTSLILLVAVQA. Cystine bridges form between Cys-28/Cys-59 and Cys-99/Cys-116.

It belongs to the PBP/GOBP family. Post-translationally, N-glycosylated. As to expression, tubular accessory sex gland.

The protein localises to the secreted. May be a carrier protein for lipids. The chain is B1 protein from Tenebrio molitor (Yellow mealworm beetle).